Here is a 105-residue protein sequence, read N- to C-terminus: Cell division protein FtsL (105 aa).

Residues 1-22 lie on the Cytoplasmic side of the membrane; it reads MIGNERHGLVGVIGADLIRNAK. A helical transmembrane segment spans residues 23 to 43; it reads IPLILLVAVLISAVLVVTTAH. Residues 44–105 are Periplasmic-facing; the sequence is RTRLLTAERE…DPSQENIVIK (62 aa).

The protein belongs to the FtsL family. In terms of assembly, part of a complex composed of FtsB, FtsL and FtsQ.

It is found in the cell inner membrane. Essential cell division protein. May link together the upstream cell division proteins, which are predominantly cytoplasmic, with the downstream cell division proteins, which are predominantly periplasmic. This is Cell division protein FtsL from Yersinia pestis.